The chain runs to 429 residues: Serine hydroxymethyltransferase (429 aa).

(6S)-5,6,7,8-tetrahydrofolate is bound by residues Leu-127 and 131-133 (GHL). Position 236 is an N6-(pyridoxal phosphate)lysine (Lys-236). Residue Glu-252 coordinates (6S)-5,6,7,8-tetrahydrofolate.

It belongs to the SHMT family. Homodimer. Requires pyridoxal 5'-phosphate as cofactor.

The protein resides in the cytoplasm. It catalyses the reaction (6R)-5,10-methylene-5,6,7,8-tetrahydrofolate + glycine + H2O = (6S)-5,6,7,8-tetrahydrofolate + L-serine. Its pathway is one-carbon metabolism; tetrahydrofolate interconversion. The protein operates within amino-acid biosynthesis; glycine biosynthesis; glycine from L-serine: step 1/1. Catalyzes the reversible interconversion of serine and glycine with tetrahydrofolate (THF) serving as the one-carbon carrier. This reaction serves as the major source of one-carbon groups required for the biosynthesis of purines, thymidylate, methionine, and other important biomolecules. Also exhibits THF-independent aldolase activity toward beta-hydroxyamino acids, producing glycine and aldehydes, via a retro-aldol mechanism. The sequence is that of Serine hydroxymethyltransferase from Rhodospirillum centenum (strain ATCC 51521 / SW).